The following is a 288-amino-acid chain: L-threonine kinase (288 aa).

ATP is bound at residue 80–90 (PIAKGMASSTA).

It belongs to the GHMP kinase family. PduX subfamily.

The protein localises to the cytoplasm. It catalyses the reaction L-threonine + ATP = O-phospho-L-threonine + ADP + H(+). The protein operates within cofactor biosynthesis; adenosylcobalamin biosynthesis. Its pathway is polyol metabolism; 1,2-propanediol degradation. L-threonine kinase that catalyzes the conversion of L-threonine to L-threonine-O-3-phosphate. Involved in the de novo synthesis of adenosylcobalamin (coenzyme B12) and the assimilation of cobyric acid. Functionally, expression of a cosmid containing the full 21-gene pdu operon in E.coli allows E.coli to grow on 1,2-propanediol (1,2-PD) with the appearance of bacterial microcompartments (BMC) in its cytoplasm. Its function is as follows. The 1,2-PD-specific bacterial microcompartment (BMC) concentrates low levels of 1,2-PD catabolic enzymes, concentrates volatile reaction intermediates thus enhancing pathway flux and keeps the level of toxic, mutagenic propionaldehyde low. This gene probably benefits from its induction via the Pdu promoter, rather than a physical interaction with the BMC. This Citrobacter freundii protein is L-threonine kinase.